The primary structure comprises 132 residues: Small ribosomal subunit protein uS8 (132 aa).

Belongs to the universal ribosomal protein uS8 family. As to quaternary structure, part of the 30S ribosomal subunit. Contacts proteins S5 and S12.

Functionally, one of the primary rRNA binding proteins, it binds directly to 16S rRNA central domain where it helps coordinate assembly of the platform of the 30S subunit. This Anaeromyxobacter sp. (strain Fw109-5) protein is Small ribosomal subunit protein uS8.